The primary structure comprises 453 residues: Nuclear distribution protein PAC1 (453 aa).

The LisH domain maps to 19–51 (QKDELHKSILDYFKTNNLHESFATLMREANQEG). Positions 69 to 96 (TSVIRLQKKIMEMESRISQLQEELSAAP) form a coiled coil. WD repeat units lie at residues 120–161 (GHRL…RTLK), 162–201 (GHTK…KNIK), 205–244 (GHDH…CTKT), 247–286 (GHAE…TKVE), 314–355 (LDPN…KTLT), 356–395 (GHDN…CTRT), and 413–452 (IEAP…KIWT).

This sequence belongs to the WD repeat LIS1/nudF family. Self-associates. Interacts with NDL1 and dynein.

The protein localises to the cytoplasm. It is found in the cytoskeleton. It localises to the spindle pole. In terms of biological role, positively regulates the activity of the minus-end directed microtubule motor protein dynein. May enhance dynein-mediated microtubule sliding by targeting dynein to the microtubule plus end. Required for nuclear migration during vegetative growth as well as development. Required for localization of dynein to the mitotic spindle poles. Recruits additional proteins to the dynein complex at SPBs. Required for retrograde early endosome (EE) transport from the hyphal tip. The chain is Nuclear distribution protein PAC1 from Mycosarcoma maydis (Corn smut fungus).